We begin with the raw amino-acid sequence, 298 residues long: Trimeric intracellular cation channel type A (298 aa).

Residues 1 to 18 lie on the Lumenal side of the membrane; it reads MDLMSALSLGELALSFSR. The helical transmembrane segment at 19 to 39 threads the bilayer; sequence VPLFPVFDLSYFIVSIIYLKY. At 40 to 51 the chain is on the cytoplasmic side; sequence EPGAVELSRRHP. The chain crosses the membrane as a helical span at residues 52-72; sequence VASWLCAMLHCFGSYILADLL. Over 73–85 the chain is Lumenal; the sequence is LGEPIIDYFSNSS. Gly-74 contacts Ca(2+). Residues 86–106 form a helical membrane-spanning segment; the sequence is SILLASGVWYLIFFCPLDLFY. Topologically, residues 107 to 144 are cytoplasmic; that stretch reads KCVCFLPVKLIFVAMKEVVRVRKIAVGIHHAHHHYHHG. Residues Lys-122 and Arg-126 each coordinate a 1,2-diacyl-sn-glycero-3-phospho-(1D-myo-inositol-4,5-bisphosphate). The chain crosses the membrane as a helical span at residues 145–165; the sequence is WFIMIATGWVKGSGVALLSNV. Over 166 to 178 the chain is Lumenal; that stretch reads EQLLRGVWKPETN. A helical membrane pass occupies residues 179-199; it reads EILHMSFPTKASLYGAILFTL. The Cytoplasmic portion of the chain corresponds to 200-209; that stretch reads QQTRWLPVSK. The helical transmembrane segment at 210–230 threads the bilayer; the sequence is ASLIFVFTMFMVSCKVFLTAT. Residues 231–234 are Lumenal-facing; it reads HSHS. A helical transmembrane segment spans residues 235–255; the sequence is SPFDILEGYICPVLFGATWGG. Residues 256-298 are Cytoplasmic-facing; it reads DHHHDNHGAPHGMGLGTQHSGLPAKAKEELGEGSRKKKTKKAD. Positions 260–298 are disordered; sequence DNHGAPHGMGLGTQHSGLPAKAKEELGEGSRKKKTKKAD. The span at 280–289 shows a compositional bias: basic and acidic residues; the sequence is KAKEELGEGS.

The protein belongs to the TMEM38 family. In terms of assembly, homotrimer; conformation seems to be controled by binding to diacylglycerol (DAG). In terms of tissue distribution, expressed at high levels in heart and striated muscle. Also detected in brain, lung and kidney.

Its subcellular location is the sarcoplasmic reticulum membrane. The protein localises to the nucleus membrane. It catalyses the reaction K(+)(in) = K(+)(out). Its activity is regulated as follows. Channel activity is activated by a change of voltage within the sarcoplasmic reticulum lumen and blocked by luminal high Ca(2+) levels. Functionally, intracellular monovalent cation channel required for maintenance of rapid intracellular calcium release. Acts as a potassium counter-ion channel that functions in synchronization with calcium release from intracellular stores. Opened by a change of voltage within the sarcoplasmic reticulum lumen. In Mus musculus (Mouse), this protein is Trimeric intracellular cation channel type A (Tmem38a).